A 514-amino-acid polypeptide reads, in one-letter code: RNA-splicing ligase RtcB homolog (514 aa).

Mn(2+)-binding residues include aspartate 128, cysteine 131, histidine 236, histidine 268, and histidine 362. 235–239 (NHYAE) lines the GMP pocket. Residues 362-363 (HN), 411-414 (GGTM), serine 418, 437-440 (HGAG), and lysine 513 contribute to the GMP site. Histidine 437 (GMP-histidine intermediate) is an active-site residue.

Belongs to the RtcB family. In terms of assembly, catalytic component of the tRNA-splicing ligase complex. Mn(2+) serves as cofactor.

The enzyme catalyses a 3'-end 3'-phospho-ribonucleotide-RNA + a 5'-end dephospho-ribonucleoside-RNA + GTP = a ribonucleotidyl-ribonucleotide-RNA + GMP + diphosphate. It catalyses the reaction a 3'-end 2',3'-cyclophospho-ribonucleotide-RNA + a 5'-end dephospho-ribonucleoside-RNA + GTP + H2O = a ribonucleotidyl-ribonucleotide-RNA + GMP + diphosphate + H(+). Functionally, catalytic subunit of the tRNA-splicing ligase complex that acts by directly joining spliced tRNA halves to mature-sized tRNAs by incorporating the precursor-derived splice junction phosphate into the mature tRNA as a canonical 3',5'-phosphodiester. May act as an RNA ligase with broad substrate specificity, and may function toward other RNAs. This Ostreococcus lucimarinus (strain CCE9901) protein is RNA-splicing ligase RtcB homolog.